Reading from the N-terminus, the 407-residue chain is uncharacterized protein (407 aa).

Residues 10–37 (DKLEQLANDVVTELTDMENKYKDLHVEL) are a coiled coil.

This is an uncharacterized protein from Bacillus subtilis (strain 168).